The chain runs to 462 residues: Zinc transporter 6-B (462 aa).

The Cytoplasmic segment spans residues 1 to 33 (MGTIYLFRKTQRSLLGKLTQEFRLVTADRRSWK). Residues 34–54 (ILLFGAINVVCTGFLLTWCSS) traverse the membrane as a helical segment. The Extracellular portion of the chain corresponds to 55–64 (TNSMALTAYT). Residues 65–85 (YLTIFDLFSLITSLISYWVMM) form a helical membrane-spanning segment. Over 86–98 (KKPSPTYSFGFER) the chain is Cytoplasmic. Residues 99-119 (LEVLAVFASTVLAQLGALFIL) form a helical membrane-spanning segment. The Extracellular segment spans residues 120 to 134 (KESAERFLEQPEIHT). Residues 135-155 (GRLLVGTFVALFFNLFTMLSI) form a helical membrane-spanning segment. The Cytoplasmic portion of the chain corresponds to 156 to 200 (RNKPFAYVSEAASTSWLQEHVADLSRSLCGVIPGLSSIFLPRMNP). The chain crosses the membrane as a helical span at residues 201 to 221 (FVLIDIAGALALCITYMLIEI). Topologically, residues 222 to 223 (NN) are extracellular. A helical membrane pass occupies residues 224-244 (YFAVDTASAIAIAVMTFGTMY). Residues 245–462 (PMSVYSGKVL…TPGQFTQFRQ (218 aa)) are Cytoplasmic-facing.

Belongs to the cation diffusion facilitator (CDF) transporter (TC 2.A.4) family. SLC30A subfamily. As to quaternary structure, heterodimer with SLC30A5; form a functional zinc ion transmembrane transporter.

Its subcellular location is the golgi apparatus. The protein resides in the trans-Golgi network membrane. Has probably no intrinsic transporter activity but together with SLC30A5 forms a functional zinc ion:proton antiporter heterodimer, mediating zinc entry into the lumen of organelles along the secretory pathway. As part of that zinc ion:proton antiporter, contributes to zinc ion homeostasis within the early secretory pathway and regulates the activation and folding of enzymes like alkaline phosphatases and enzymes involved in phosphatidylinositol glycan anchor biosynthesis. The polypeptide is Zinc transporter 6-B (slc30a6-b) (Xenopus laevis (African clawed frog)).